A 317-amino-acid polypeptide reads, in one-letter code: Putative 2-hydroxyacid dehydrogenase SAB2178 (317 aa).

Residues 155–156 (EI), 234–236 (ASR), and Asp-260 contribute to the NAD(+) site. The active site involves Arg-236. Glu-265 is an active-site residue. The active-site Proton donor is the His-283. Residue 283 to 286 (HIGN) participates in NAD(+) binding.

The protein belongs to the D-isomer specific 2-hydroxyacid dehydrogenase family.

This is Putative 2-hydroxyacid dehydrogenase SAB2178 from Staphylococcus aureus (strain bovine RF122 / ET3-1).